The following is a 70-amino-acid chain: Melittin (70 aa).

A signal peptide spans 1 to 21; sequence MKFLVNVALVFMVVYISFIYA. A propeptide spans 22-43 (removed by a dipeptidylpeptidase); sequence APEPEPAPEAEAEADAEADPEA. An N-formylglycine; partial modification is found at glycine 44. Glutamine 69 is modified (glutamine amide).

It belongs to the melittin family. As to quaternary structure, monomer (in solution and for integration into membranes), homotetramer (in solution and potentially as a toroidal pore in membranes), and potenially homomultimer (as a toroidal pore in membranes). As to expression, expressed by the venom gland.

It is found in the secreted. The protein resides in the target cell membrane. In terms of biological role, main toxin of bee venom with strong hemolytic activity and antimicrobial activity. It has enhancing effects on bee venom phospholipase A2 activity. This amphipathic toxin binds to negatively charged membrane surface and forms pore by inserting into lipid bilayers inducing the leakage of ions and molecules and the enhancement of permeability that ultimately leads to cell lysis. It acts as a voltage-gated pore with higher selectivity for anions over cations. The ion conductance has been shown to be voltage-dependent. Self-association of melittin in membranes is promoted by high ionic strength, but not by the presence of negatively charged lipids. In vivo, intradermal injection into healthy human volunteers produce sharp pain sensation and an inflammatory response. It produces pain by activating primary nociceptor cells directly and indirectly due to its ability to activate plasma membrane phospholipase A2 and its pore-forming activity. The polypeptide is Melittin (MELT) (Polistes hebraeus (Paper wasp)).